The sequence spans 606 residues: Arginine--tRNA ligase (606 aa).

The short motif at 126-136 (PNTNKPLHLGH) is the 'HIGH' region element.

Belongs to the class-I aminoacyl-tRNA synthetase family. As to quaternary structure, monomer.

The protein localises to the cytoplasm. It catalyses the reaction tRNA(Arg) + L-arginine + ATP = L-arginyl-tRNA(Arg) + AMP + diphosphate. The sequence is that of Arginine--tRNA ligase from Phocaeicola vulgatus (strain ATCC 8482 / DSM 1447 / JCM 5826 / CCUG 4940 / NBRC 14291 / NCTC 11154) (Bacteroides vulgatus).